Consider the following 502-residue polypeptide: tRNA-specific adenosine deaminase 1 (502 aa).

An A to I editase domain is found at 63–501 (SMGTGTKCIG…IRNPPDYHQF (439 aa)). Position 87 (H87) interacts with Zn(2+). E89 functions as the Proton donor in the catalytic mechanism. 1D-myo-inositol hexakisphosphate-binding residues include R93 and R94. Zn(2+) is bound at residue C142. S191 carries the post-translational modification Phosphoserine. Position 299 (C299) interacts with Zn(2+). 1D-myo-inositol hexakisphosphate contacts are provided by K302, R305, K435, and K470.

Belongs to the ADAT1 family. Requires 1D-myo-inositol hexakisphosphate as cofactor.

It catalyses the reaction adenosine(37) in tRNA(Ala) + H2O + H(+) = inosine(37) in tRNA(Ala) + NH4(+). Functionally, specifically deaminates adenosine-37 to inosine in tRNA-Ala. The polypeptide is tRNA-specific adenosine deaminase 1 (ADAT1) (Macaca fascicularis (Crab-eating macaque)).